Here is a 183-residue protein sequence, read N- to C-terminus: Adenine phosphoribosyltransferase (183 aa).

Belongs to the purine/pyrimidine phosphoribosyltransferase family. As to quaternary structure, homodimer.

The protein localises to the cytoplasm. It catalyses the reaction AMP + diphosphate = 5-phospho-alpha-D-ribose 1-diphosphate + adenine. Its pathway is purine metabolism; AMP biosynthesis via salvage pathway; AMP from adenine: step 1/1. Functionally, catalyzes a salvage reaction resulting in the formation of AMP, that is energically less costly than de novo synthesis. The chain is Adenine phosphoribosyltransferase from Shewanella sp. (strain MR-7).